Reading from the N-terminus, the 369-residue chain is tRNA/tmRNA (uracil-C(5))-methyltransferase (369 aa).

Gln190, Tyr218, Asn223, Glu239, and Asp301 together coordinate S-adenosyl-L-methionine. Cys326 acts as the Nucleophile in catalysis. The Proton acceptor role is filled by Glu360.

It belongs to the class I-like SAM-binding methyltransferase superfamily. RNA M5U methyltransferase family. TrmA subfamily.

It carries out the reaction uridine(54) in tRNA + S-adenosyl-L-methionine = 5-methyluridine(54) in tRNA + S-adenosyl-L-homocysteine + H(+). The enzyme catalyses uridine(341) in tmRNA + S-adenosyl-L-methionine = 5-methyluridine(341) in tmRNA + S-adenosyl-L-homocysteine + H(+). In terms of biological role, dual-specificity methyltransferase that catalyzes the formation of 5-methyluridine at position 54 (m5U54) in all tRNAs, and that of position 341 (m5U341) in tmRNA (transfer-mRNA). In Vibrio vulnificus (strain YJ016), this protein is tRNA/tmRNA (uracil-C(5))-methyltransferase.